A 3329-amino-acid polypeptide reads, in one-letter code: Breast cancer type 2 susceptibility protein homolog (3329 aa).

The interval 1-40 is interaction with PALB2; the sequence is MPVEYKRRPTFWEIFKARCSTADLGPISLNWFEELSSEAP. 2 disordered regions span residues 37 to 69 and 207 to 241; these read SEAP…QRNP and EARS…SVPS. Phosphoserine is present on residues serine 435 and serine 481. Positions 628-650 are disordered; it reads PDSSDKKRCLPNDPEEPSLTNSF. Residues 628–979 are interaction with NPM1; it reads PDSSDKKRCL…DKWSEFLDPV (352 aa). Serine 735 bears the Phosphoserine mark. Positions 934 to 953 are enriched in basic and acidic residues; sequence EKSRNNIEQHQKGTEDKDFK. Positions 934–965 are disordered; it reads EKSRNNIEQHQKGTEDKDFKSNSSLNMKSDGN. Polar residues predominate over residues 954–965; sequence SNSSLNMKSDGN. 2 BRCA2 repeats span residues 981–1015 and 1192–1226; these read NHNF…DIEE and NEME…DIEN. Residues 982 to 2035 are interaction with RAD51; sequence HNFGGSFRTA…LHKVKGMLEE (1054 aa). The interval 1296–1340 is disordered; that stretch reads NTKHEDSYTSSQRNNLENSDGSMSSTSGPVYIHKGDSDLPADQGS. Residues 1303 to 1323 show a composition bias toward polar residues; it reads YTSSQRNNLENSDGSMSSTSG. BRCA2 repeat units lie at residues 1394-1428, 1491-1525, 1623-1657, 1924-1958, and 2004-2038; these read IKEF…RETD, KEPT…ETQY, TEDS…EQGD, PSRT…EMDG, and NSSV…EFDL. Phosphoserine is present on serine 2048. A disordered region spans residues 2073-2099; sequence NSKLQKTYNDKSSLPSNYKESGSSGNT. The segment covering 2074–2099 has biased composition (polar residues); the sequence is SKLQKTYNDKSSLPSNYKESGSSGNT. The tract at residues 2219-2285 is interaction with HSF2BP; sequence KRGGVTVDAV…EPVTCGPFCS (67 aa). Residues 2298 to 2466 form an interaction with FANCD2 region; it reads TSPAQELLSK…SPKQLYIYGV (169 aa). The disordered stretch occupies residues 2361–2393; the sequence is FHGDEHFNSKNVNLEGKNQKSTDGDREDGNDSH. A compositionally biased stretch (basic and acidic residues) spans 2377 to 2393; sequence KNQKSTDGDREDGNDSH. Positions 2402-2753 are interaction with SEM1; it reads MSSLQSARDL…QRVYPLQWVE (352 aa). Positions 2603-2619 match the Nuclear export signal; masked by interaction with SEM1 motif; that stretch reads AAKTLVLCISDIISPST. At serine 3214 the chain carries Phosphoserine; by CDK1 and CDK2. Disordered regions lie at residues 3221–3257 and 3273–3329; these read FQPP…VSLP and QALT…AVES. Serine 3241 is modified (phosphoserine). Residues 3309–3329 show a composition bias toward basic and acidic residues; it reads SRKESLRDCRGDSSEKLAVES.

As to quaternary structure, monomer and dimer. Interacts with RAD51; regulates RAD51 recruitment and function at sites of DNA repair. Interacts with SEM1, WDR16, USP11, DMC1, ROCK2 and NPM1. Interacts with both nonubiquitinated and monoubiquitinated FANCD2; this complex also includes XRCC3 and phosphorylated FANCG. Part of a BRCA complex containing BRCA1, BRCA2 and PALB2. Component of the homologous recombination repair (HR) complex composed of ERCC5/XPG, BRCA2, PALB2, DSS1 and RAD51. Within the complex, interacts with ERCC5/XPG and PALB2. Interacts directly with PALB2 which may serve as a scaffold for a HR complex containing PALB2, BRCA2, RAD51C, RAD51 and XRCC3. Interacts with BRCA1 only in the presence of PALB2 which serves as the bridging protein. Interacts with POLH; the interaction is direct. Interacts with the TREX-2 complex subunits PCID2 and SEM1. Interacts with HSF2BP and BRME1; the interaction with HSF2BP is direct and allows the formation of a ternary complex. The complex BRME1:HSF2BP:BRCA2 interacts with SPATA22, MEIOB and RAD51. In terms of processing, phosphorylated by ATM upon irradiation-induced DNA damage. Phosphorylation by CHEK1 and CHEK2 regulates interaction with RAD51. Phosphorylation at Ser-3291 by CDK1 and CDK2 is low in S phase when recombination is active, but increases as cells progress towards mitosis; this phosphorylation prevents homologous recombination-dependent repair during S phase and G2 by inhibiting RAD51 binding. Post-translationally, ubiquitinated in the absence of DNA damage; this does not lead to proteasomal degradation. In contrast, ubiquitination in response to DNA damage leads to proteasomal degradation. In terms of tissue distribution, widely expressed. Highest expression in cerebellum, testis, ileum, appendix, epididymis, ovary and mammary gland. No expression in lung.

Its subcellular location is the nucleus. The protein localises to the cytoplasm. The protein resides in the cytoskeleton. It is found in the microtubule organizing center. It localises to the centrosome. Involved in double-strand break repair and/or homologous recombination. Binds RAD51 and potentiates recombinational DNA repair by promoting assembly of RAD51 onto single-stranded DNA (ssDNA). Acts by targeting RAD51 to ssDNA over double-stranded DNA, enabling RAD51 to displace replication protein-A (RPA) from ssDNA and stabilizing RAD51-ssDNA filaments by blocking ATP hydrolysis. Part of a PALB2-scaffolded HR complex containing RAD51C and which is thought to play a role in DNA repair by HR. May participate in S phase checkpoint activation. Binds selectively to ssDNA, and to ssDNA in tailed duplexes and replication fork structures. May play a role in the extension step after strand invasion at replication-dependent DNA double-strand breaks; together with PALB2 is involved in both POLH localization at collapsed replication forks and DNA polymerization activity. In concert with NPM1, regulates centrosome duplication. Interacts with the TREX-2 complex (transcription and export complex 2) subunits PCID2 and SEM1, and is required to prevent R-loop-associated DNA damage and thus transcription-associated genomic instability, independently of its known role in homologous recombination. This is Breast cancer type 2 susceptibility protein homolog from Mus musculus (Mouse).